A 460-amino-acid chain; its full sequence is Bifunctional protein GlmU (460 aa).

The interval 1 to 229 (MTNYAIILAA…FNESLGVNDR (229 aa)) is pyrophosphorylase. UDP-N-acetyl-alpha-D-glucosamine-binding positions include 8–11 (LAAG), Lys22, Gln72, and 77–78 (GT). Asp102 contributes to the Mg(2+) binding site. Residues Gly139, Glu154, Asn169, and Asn227 each coordinate UDP-N-acetyl-alpha-D-glucosamine. Mg(2+) is bound at residue Asn227. The linker stretch occupies residues 230 to 250 (VALATAETVMRQRITQKHMVN). An N-acetyltransferase region spans residues 251–460 (GVTFHNPETV…RLAHHPSRSK (210 aa)). UDP-N-acetyl-alpha-D-glucosamine is bound by residues Arg332 and Lys350. Catalysis depends on His362, which acts as the Proton acceptor. Tyr365 and Asn376 together coordinate UDP-N-acetyl-alpha-D-glucosamine. Residues Ala379, 385–386 (NY), Ser404, Ala422, and Arg439 each bind acetyl-CoA.

It in the N-terminal section; belongs to the N-acetylglucosamine-1-phosphate uridyltransferase family. This sequence in the C-terminal section; belongs to the transferase hexapeptide repeat family. In terms of assembly, homotrimer. Requires Mg(2+) as cofactor.

The protein localises to the cytoplasm. It carries out the reaction alpha-D-glucosamine 1-phosphate + acetyl-CoA = N-acetyl-alpha-D-glucosamine 1-phosphate + CoA + H(+). The catalysed reaction is N-acetyl-alpha-D-glucosamine 1-phosphate + UTP + H(+) = UDP-N-acetyl-alpha-D-glucosamine + diphosphate. It functions in the pathway nucleotide-sugar biosynthesis; UDP-N-acetyl-alpha-D-glucosamine biosynthesis; N-acetyl-alpha-D-glucosamine 1-phosphate from alpha-D-glucosamine 6-phosphate (route II): step 2/2. The protein operates within nucleotide-sugar biosynthesis; UDP-N-acetyl-alpha-D-glucosamine biosynthesis; UDP-N-acetyl-alpha-D-glucosamine from N-acetyl-alpha-D-glucosamine 1-phosphate: step 1/1. Its pathway is bacterial outer membrane biogenesis; LPS lipid A biosynthesis. Catalyzes the last two sequential reactions in the de novo biosynthetic pathway for UDP-N-acetylglucosamine (UDP-GlcNAc). The C-terminal domain catalyzes the transfer of acetyl group from acetyl coenzyme A to glucosamine-1-phosphate (GlcN-1-P) to produce N-acetylglucosamine-1-phosphate (GlcNAc-1-P), which is converted into UDP-GlcNAc by the transfer of uridine 5-monophosphate (from uridine 5-triphosphate), a reaction catalyzed by the N-terminal domain. This Streptococcus pyogenes serotype M49 (strain NZ131) protein is Bifunctional protein GlmU.